A 313-amino-acid chain; its full sequence is Platelet glycoprotein VI (313 aa).

The N-terminal stretch at 1–21 (MSPASPTFFCIGLCVLQVIQT) is a signal peptide. Topologically, residues 22–265 (QSGPLPKPSL…FGFAHQHYAK (244 aa)) are extracellular. Ig-like C2-type domains are found at residues 27–105 (PKPS…DQLE) and 115–197 (PSLS…APSD). Cys49 and Cys89 form a disulfide bridge. A glycan (N-linked (GlcNAc...) asparagine) is linked at Asn93. A disulfide bridge connects residues Cys135 and Cys181. Residues 213 to 236 (VPTEESFPVTESSRRPSILPTNKI) form a disordered region. A glycan (N-linked (GlcNAc...) asparagine) is linked at Asn244. Residues 266-286 (GNLVRICLGATIIIILLGLLA) traverse the membrane as a helical segment. At 287 to 313 (EDWHSRKKCLQHRMRALQRPLPPLPLA) the chain is on the cytoplasmic side.

As to quaternary structure, associated with Fc receptor gamma chain. The GPVI:FcRgamma complex is associated with the Src kinase family FYN and LYN. Interacts with TRAF4. Interacts with COL1A1, but not with COL4A4. Megakaryocytes and platelets.

It localises to the cell membrane. Functionally, collagen receptor involved in collagen-induced platelet adhesion and activation. Plays a key role in platelet procoagulant activity and subsequent thrombin and fibrin formation. This procoagulant function may contribute to arterial and venous thrombus formation. The signaling pathway involves the FcR gamma-chain, the Src kinases (likely FYN or LYN) and SYK, the adapter protein LAT and leads to the activation of PLCG2. The polypeptide is Platelet glycoprotein VI (Mus musculus (Mouse)).